Here is a 195-residue protein sequence, read N- to C-terminus: dITP/XTP pyrophosphatase (195 aa).

9 to 14 (TNNQGK) contributes to the substrate binding site. E39 and D68 together coordinate Mg(2+). The active-site Proton acceptor is D68. Residues S69, 146–149 (FGYD), K169, and 174–175 (HR) contribute to the substrate site.

The protein belongs to the HAM1 NTPase family. As to quaternary structure, homodimer. It depends on Mg(2+) as a cofactor.

The enzyme catalyses XTP + H2O = XMP + diphosphate + H(+). The catalysed reaction is dITP + H2O = dIMP + diphosphate + H(+). It catalyses the reaction ITP + H2O = IMP + diphosphate + H(+). Functionally, pyrophosphatase that catalyzes the hydrolysis of nucleoside triphosphates to their monophosphate derivatives, with a high preference for the non-canonical purine nucleotides XTP (xanthosine triphosphate), dITP (deoxyinosine triphosphate) and ITP. Seems to function as a house-cleaning enzyme that removes non-canonical purine nucleotides from the nucleotide pool, thus preventing their incorporation into DNA/RNA and avoiding chromosomal lesions. This is dITP/XTP pyrophosphatase from Gloeobacter violaceus (strain ATCC 29082 / PCC 7421).